A 213-amino-acid chain; its full sequence is Superoxide dismutase [Fe] (213 aa).

The Fe cation site is built by His28, His82, Asp164, and His168.

It belongs to the iron/manganese superoxide dismutase family. As to quaternary structure, homotetramer. Fe cation is required as a cofactor.

It carries out the reaction 2 superoxide + 2 H(+) = H2O2 + O2. Functionally, destroys superoxide anion radicals which are normally produced within the cells and which are toxic to biological systems. The chain is Superoxide dismutase [Fe] (sodB) from Aquifex aeolicus (strain VF5).